The primary structure comprises 146 residues: Transcriptional regulator MraZ (146 aa).

SpoVT-AbrB domains lie at 5–47 (EYYH…TITD) and 76–119 (SIQV…AKEK).

It belongs to the MraZ family. Forms oligomers.

It localises to the cytoplasm. Its subcellular location is the nucleoid. The chain is Transcriptional regulator MraZ from Dictyoglomus thermophilum (strain ATCC 35947 / DSM 3960 / H-6-12).